An 897-amino-acid chain; its full sequence is Staphylococcal nuclease domain-containing protein 1 (897 aa).

4 consecutive TNase-like domains span residues glutamine 18 to glutamate 167, lysine 194 to aspartate 329, arginine 342 to lysine 499, and glycine 528 to asparagine 663. The 59-residue stretch at alanine 732–arginine 790 folds into the Tudor domain.

The protein localises to the cytoplasm. In Danio rerio (Zebrafish), this protein is Staphylococcal nuclease domain-containing protein 1 (snd1).